Here is a 165-residue protein sequence, read N- to C-terminus: Crossover junction endodeoxyribonuclease RuvC (165 aa).

Active-site residues include D8, E66, and D138. 3 residues coordinate Mg(2+): D8, E66, and D138.

The protein belongs to the RuvC family. As to quaternary structure, homodimer which binds Holliday junction (HJ) DNA. The HJ becomes 2-fold symmetrical on binding to RuvC with unstacked arms; it has a different conformation from HJ DNA in complex with RuvA. In the full resolvosome a probable DNA-RuvA(4)-RuvB(12)-RuvC(2) complex forms which resolves the HJ. It depends on Mg(2+) as a cofactor.

The protein localises to the cytoplasm. The enzyme catalyses Endonucleolytic cleavage at a junction such as a reciprocal single-stranded crossover between two homologous DNA duplexes (Holliday junction).. In terms of biological role, the RuvA-RuvB-RuvC complex processes Holliday junction (HJ) DNA during genetic recombination and DNA repair. Endonuclease that resolves HJ intermediates. Cleaves cruciform DNA by making single-stranded nicks across the HJ at symmetrical positions within the homologous arms, yielding a 5'-phosphate and a 3'-hydroxyl group; requires a central core of homology in the junction. The consensus cleavage sequence is 5'-(A/T)TT(C/G)-3'. Cleavage occurs on the 3'-side of the TT dinucleotide at the point of strand exchange. HJ branch migration catalyzed by RuvA-RuvB allows RuvC to scan DNA until it finds its consensus sequence, where it cleaves and resolves the cruciform DNA. This is Crossover junction endodeoxyribonuclease RuvC from Methylococcus capsulatus (strain ATCC 33009 / NCIMB 11132 / Bath).